A 359-amino-acid chain; its full sequence is Large ribosomal subunit protein uL3 (359 aa).

The segment at V336 to Q359 is disordered.

It belongs to the universal ribosomal protein uL3 family. As to quaternary structure, part of the 50S ribosomal subunit. Forms a cluster with proteins L14 and L24e.

Functionally, one of the primary rRNA binding proteins, it binds directly near the 3'-end of the 23S rRNA, where it nucleates assembly of the 50S subunit. The sequence is that of Large ribosomal subunit protein uL3 from Thermococcus sibiricus (strain DSM 12597 / MM 739).